Reading from the N-terminus, the 382-residue chain is Pyruvate dehydrogenase E1 component subunit beta, mitochondrial (382 aa).

The N-terminal 46 residues, 1–46 (MSRFLRPAFRLATTATRASTIRPTPSSLITKAAAVPTTRLLQKRSY), are a transit peptide targeting the mitochondrion. Residue Glu-112 coordinates thiamine diphosphate. Residues Ile-165, Ala-213, Ile-214, Asp-216, and Asn-218 each contribute to the K(+) site.

As to quaternary structure, eukaryotic pyruvate dehydrogenase (PDH) complexes are organized as a core consisting of the oligomeric dihydrolipoamide acetyl-transferase (E2), around which are arranged multiple copies of pyruvate dehydrogenase (E1), dihydrolipoamide dehydrogenase (E3) and protein X (E3BP) bound by non-covalent bonds. The Chaetomium thermophilum PDH complex contains 60 E2 units, 12 E3BP units, about 20 E1 units, and 12 or more E3 units. The units are organized in 1 E2 60-mer, 4 E3BP trimers, about 20 E1 tetramers, and a maximum of 12 E3 dimers. Pyruvate dehydrogenase (E1) is active as a tetramer of 2 alpha and 2 beta subunits. The E3BP trimers are bound inside the icosahedral core with tetrahedral symmetry. Thiamine diphosphate is required as a cofactor.

It localises to the mitochondrion. It catalyses the reaction N(6)-[(R)-lipoyl]-L-lysyl-[protein] + pyruvate + H(+) = N(6)-[(R)-S(8)-acetyldihydrolipoyl]-L-lysyl-[protein] + CO2. The 10-megadalton pyruvate dehydrogenase complex contains multiple copies of three enzymatic components: pyruvate dehydrogenase (E1), dihydrolipoamide acetyltransferase (E2) and lipoamide dehydrogenase (E3) and catalyzes the overall oxidative decarboxylation of pyruvate to form acetyl-CoA and CO(2). Within the complex, pyruvate and thiamine pyrophosphate (TPP or vitamin B1) are bound by pyruvate dehydrogenase E1 subunits alpha and beta and pyruvate is decarboxylated leading to the 2-carbon hydrohyethyl bound to TPP. The E2 component contains covalently-bound lipoyl cofactors and transfers the hydroxyethyl group from TPP to an oxidized form of covalently bound lipoamide, and the resulting acetyl group is then transferred to free coenzyme A to form acetyl-CoA and reduced dihydrolipoamide-E2. Finally, the flavoprotein dihydrolipoamide dehydrogenase (E3) re-oxidizes the lipoyl group of dihydrolipoamide-E2 to form lipoamide-E2 and NADH. A fourth subunit, E3BP, is responsible for tethering E3 in proximity to the core, forming the entire metabolon. The sequence is that of Pyruvate dehydrogenase E1 component subunit beta, mitochondrial from Chaetomium thermophilum (strain DSM 1495 / CBS 144.50 / IMI 039719) (Thermochaetoides thermophila).